A 90-amino-acid chain; its full sequence is Large ribosomal subunit protein bL31 (90 aa).

The tract at residues 71 to 90 (KVKKFPSNADNQKEPAEEQE) is disordered. Basic and acidic residues predominate over residues 81–90 (NQKEPAEEQE).

Belongs to the bacterial ribosomal protein bL31 family. Type A subfamily. As to quaternary structure, part of the 50S ribosomal subunit.

In terms of biological role, binds the 23S rRNA. This chain is Large ribosomal subunit protein bL31 (rpmE), found in Aster yellows witches'-broom phytoplasma (strain AYWB).